The chain runs to 473 residues: Siroheme synthase 2 (473 aa).

The interval 1 to 204 is precorrin-2 dehydrogenase /sirohydrochlorin ferrochelatase; that stretch reads MDYFPIFCQL…NDHVQADQHV (204 aa). NAD(+)-binding positions include 22–23 and 43–44; these read EI and CE. Ser-128 bears the Phosphoserine mark. Residues 216–473 are uroporphyrinogen-III C-methyltransferase; sequence GEVVLVGAGP…KVTECVAHVG (258 aa). An S-adenosyl-L-methionine-binding site is contributed by Pro-225. Asp-248 functions as the Proton acceptor in the catalytic mechanism. The active-site Proton donor is Lys-270. S-adenosyl-L-methionine-binding positions include 301–303, Ile-306, 331–332, Met-382, and Gly-411; these read GGD and TA.

It in the N-terminal section; belongs to the precorrin-2 dehydrogenase / sirohydrochlorin ferrochelatase family. In the C-terminal section; belongs to the precorrin methyltransferase family.

It carries out the reaction uroporphyrinogen III + 2 S-adenosyl-L-methionine = precorrin-2 + 2 S-adenosyl-L-homocysteine + H(+). The enzyme catalyses precorrin-2 + NAD(+) = sirohydrochlorin + NADH + 2 H(+). The catalysed reaction is siroheme + 2 H(+) = sirohydrochlorin + Fe(2+). Its pathway is cofactor biosynthesis; adenosylcobalamin biosynthesis; precorrin-2 from uroporphyrinogen III: step 1/1. The protein operates within cofactor biosynthesis; adenosylcobalamin biosynthesis; sirohydrochlorin from precorrin-2: step 1/1. It functions in the pathway porphyrin-containing compound metabolism; siroheme biosynthesis; precorrin-2 from uroporphyrinogen III: step 1/1. It participates in porphyrin-containing compound metabolism; siroheme biosynthesis; siroheme from sirohydrochlorin: step 1/1. Its pathway is porphyrin-containing compound metabolism; siroheme biosynthesis; sirohydrochlorin from precorrin-2: step 1/1. Its function is as follows. Multifunctional enzyme that catalyzes the SAM-dependent methylations of uroporphyrinogen III at position C-2 and C-7 to form precorrin-2 via precorrin-1. Then it catalyzes the NAD-dependent ring dehydrogenation of precorrin-2 to yield sirohydrochlorin. Finally, it catalyzes the ferrochelation of sirohydrochlorin to yield siroheme. The protein is Siroheme synthase 2 of Yersinia pseudotuberculosis serotype O:1b (strain IP 31758).